The sequence spans 380 residues: tRNA (guanine(26)-N(2))-dimethyltransferase (380 aa).

A Trm1 methyltransferase domain is found at 2 to 374 (ITVNEGSVTI…AGIGEIEEVL (373 aa)). 5 residues coordinate S-adenosyl-L-methionine: Arg35, Arg65, Asp83, Asp109, and Ala110. 4 residues coordinate Zn(2+): Cys242, Cys245, Cys261, and Cys264.

Belongs to the class I-like SAM-binding methyltransferase superfamily. Trm1 family.

It catalyses the reaction guanosine(26) in tRNA + 2 S-adenosyl-L-methionine = N(2)-dimethylguanosine(26) in tRNA + 2 S-adenosyl-L-homocysteine + 2 H(+). Functionally, dimethylates a single guanine residue at position 26 of a number of tRNAs using S-adenosyl-L-methionine as donor of the methyl groups. The chain is tRNA (guanine(26)-N(2))-dimethyltransferase from Methanothermobacter thermautotrophicus (strain ATCC 29096 / DSM 1053 / JCM 10044 / NBRC 100330 / Delta H) (Methanobacterium thermoautotrophicum).